The sequence spans 474 residues: tRNA-2-methylthio-N(6)-dimethylallyladenosine synthase (474 aa).

In terms of domain architecture, MTTase N-terminal spans 3–120 (QKLHIKTWGC…LPEMINQIRG (118 aa)). Residues cysteine 12, cysteine 49, cysteine 83, cysteine 157, cysteine 161, and cysteine 164 each coordinate [4Fe-4S] cluster. The Radical SAM core domain maps to 143 to 375 (RAEGPTAFVS…QERINQQAAQ (233 aa)). Residues 378–441 (RRMLGTEQRV…TNSLRGEVVR (64 aa)) enclose the TRAM domain.

Belongs to the methylthiotransferase family. MiaB subfamily. Monomer. The cofactor is [4Fe-4S] cluster.

The protein resides in the cytoplasm. The catalysed reaction is N(6)-dimethylallyladenosine(37) in tRNA + (sulfur carrier)-SH + AH2 + 2 S-adenosyl-L-methionine = 2-methylsulfanyl-N(6)-dimethylallyladenosine(37) in tRNA + (sulfur carrier)-H + 5'-deoxyadenosine + L-methionine + A + S-adenosyl-L-homocysteine + 2 H(+). In terms of biological role, catalyzes the methylthiolation of N6-(dimethylallyl)adenosine (i(6)A), leading to the formation of 2-methylthio-N6-(dimethylallyl)adenosine (ms(2)i(6)A) at position 37 in tRNAs that read codons beginning with uridine. The sequence is that of tRNA-2-methylthio-N(6)-dimethylallyladenosine synthase from Haemophilus influenzae (strain PittEE).